The sequence spans 429 residues: Aspartate--tRNA(Asp/Asn) ligase (429 aa).

Residue Glu-167 coordinates L-aspartate. The segment at 189–192 is aspartate; the sequence is QLYK. Arg-210 is an L-aspartate binding site. Residues 210-212 and Glu-352 each bind ATP; that span reads RAE. Mg(2+) is bound by residues Glu-352 and Ser-355. Positions 355 and 359 each coordinate L-aspartate. 400 to 403 is an ATP binding site; the sequence is GLAR.

It belongs to the class-II aminoacyl-tRNA synthetase family. Type 2 subfamily. As to quaternary structure, homodimer. Mg(2+) serves as cofactor.

Its subcellular location is the cytoplasm. It carries out the reaction tRNA(Asx) + L-aspartate + ATP = L-aspartyl-tRNA(Asx) + AMP + diphosphate. In terms of biological role, aspartyl-tRNA synthetase with relaxed tRNA specificity since it is able to aspartylate not only its cognate tRNA(Asp) but also tRNA(Asn). Reaction proceeds in two steps: L-aspartate is first activated by ATP to form Asp-AMP and then transferred to the acceptor end of tRNA(Asp/Asn). This Sulfurisphaera tokodaii (strain DSM 16993 / JCM 10545 / NBRC 100140 / 7) (Sulfolobus tokodaii) protein is Aspartate--tRNA(Asp/Asn) ligase.